Reading from the N-terminus, the 616-residue chain is Dihydroxy-acid dehydratase (616 aa).

Asp81 is a binding site for Mg(2+). Residue Cys122 participates in [2Fe-2S] cluster binding. Asp123 and Lys124 together coordinate Mg(2+). Lys124 is modified (N6-carboxylysine). Position 195 (Cys195) interacts with [2Fe-2S] cluster. Glu491 contacts Mg(2+). Catalysis depends on Ser517, which acts as the Proton acceptor.

It belongs to the IlvD/Edd family. Homodimer. [2Fe-2S] cluster is required as a cofactor. Mg(2+) serves as cofactor.

It carries out the reaction (2R)-2,3-dihydroxy-3-methylbutanoate = 3-methyl-2-oxobutanoate + H2O. The enzyme catalyses (2R,3R)-2,3-dihydroxy-3-methylpentanoate = (S)-3-methyl-2-oxopentanoate + H2O. It functions in the pathway amino-acid biosynthesis; L-isoleucine biosynthesis; L-isoleucine from 2-oxobutanoate: step 3/4. The protein operates within amino-acid biosynthesis; L-valine biosynthesis; L-valine from pyruvate: step 3/4. In terms of biological role, functions in the biosynthesis of branched-chain amino acids. Catalyzes the dehydration of (2R,3R)-2,3-dihydroxy-3-methylpentanoate (2,3-dihydroxy-3-methylvalerate) into 2-oxo-3-methylpentanoate (2-oxo-3-methylvalerate) and of (2R)-2,3-dihydroxy-3-methylbutanoate (2,3-dihydroxyisovalerate) into 2-oxo-3-methylbutanoate (2-oxoisovalerate), the penultimate precursor to L-isoleucine and L-valine, respectively. This Klebsiella pneumoniae subsp. pneumoniae (strain ATCC 700721 / MGH 78578) protein is Dihydroxy-acid dehydratase.